Here is a 1146-residue protein sequence, read N- to C-terminus: Probable phospholipid-transporting ATPase IIB (1146 aa).

Topologically, residues 1 to 143 (MADQIPLYPV…IKNQKYNVFT (143 aa)) are cytoplasmic. The chain crosses the membrane as a helical span at residues 144–164 (FIPGVLYEQFKFFLNLYFLVV). Topologically, residues 165-172 (SCSQFVPA) are extracellular. A helical transmembrane segment spans residues 173-193 (LKIGYLYTYWAPLGFVLAVTI). Over 194 to 381 (AREAIDEFRR…LDLELNQLTK (188 aa)) the chain is Cytoplasmic. Residues 382 to 402 (ALFLALVVLSVVMVTLQGFAG) traverse the membrane as a helical segment. The Extracellular portion of the chain corresponds to 403–407 (PWYRN). The chain crosses the membrane as a helical span at residues 408 to 427 (LFRFLLLFSYIIPISLRVNL). The Cytoplasmic segment spans residues 428-938 (DMGKAAYGWM…ALGQFVMHRG (511 aa)). Residue Asp467 is the 4-aspartylphosphate intermediate of the active site. Asp467, Lys468, and Thr469 together coordinate ATP. Asp467 is a binding site for Mg(2+). A Mg(2+)-binding site is contributed by Thr469. Residues 508–519 (VHSQPSGHNPSS) are compositionally biased toward polar residues. A disordered region spans residues 508 to 535 (VHSQPSGHNPSSAPLRRSQSSTPKVKKS). ATP is bound by residues Glu590, Phe632, Lys637, Lys656, Arg685, Thr686, Thr765, Gly766, Asp767, Arg847, and Lys853. Asp873 is a Mg(2+) binding site. The ATP site is built by Asn876 and Asp877. Asp877 lines the Mg(2+) pocket. The helical transmembrane segment at 939–959 (LIISTMQAVFSSVFYFASVPL) threads the bilayer. The Extracellular segment spans residues 960 to 961 (YQ). The helical transmembrane segment at 962–982 (GFLMVGYATIYTMFPVFSLVL) threads the bilayer. Residues 983-1011 (DQDVKPEMAILYPELYKDLTKGRSLSFKT) are Cytoplasmic-facing. Residues 1012–1032 (FLIWVLISIYQGGILMYGALL) form a helical membrane-spanning segment. The Extracellular portion of the chain corresponds to 1033 to 1040 (LFEDEFVH). Residues 1041–1061 (VVAISFTALILTELLMVALTI) traverse the membrane as a helical segment. At 1062–1065 (RTWH) the chain is on the cytoplasmic side. Residues 1066–1086 (WLMVVAEFLSLGCYVASLAFL) traverse the membrane as a helical segment. At 1087-1105 (NEYFGIGRVSFGAFLDVAF) the chain is on the extracellular side. A helical transmembrane segment spans residues 1106–1128 (ITTVTFLWKVSAITVVSCLPLYV). Topologically, residues 1129–1146 (LKYLKRKLSPPSYSKLSS) are cytoplasmic.

The protein belongs to the cation transport ATPase (P-type) (TC 3.A.3) family. Type IV subfamily. The cofactor is Mg(2+). Found in most tissues except spleen and muscle. Most abundant in testis. Also detected in fetal tissues.

Its subcellular location is the golgi apparatus. The protein resides in the trans-Golgi network membrane. It catalyses the reaction ATP + H2O + phospholipidSide 1 = ADP + phosphate + phospholipidSide 2.. The protein is Probable phospholipid-transporting ATPase IIB (Atp9b) of Mus musculus (Mouse).